Here is a 563-residue protein sequence, read N- to C-terminus: MNHNRLIAKEIAAIVPALEQETILNLLEKPKKSSMGDLAFPTFSLAKTMRKAPQIIASELVGQINNSYFEKVEAVGPYINFFLNKSEISAQVLKEVIKKREDYAQAAIGQGHNIVIDLSSPNIAKPFSIGHLRSTVIGDALSNIFQKLGYETVKINHLGDWGKQFGMLIVAYKKWGSEEAVRAHPIDELLKIYVRINAETKNHPELDEEAREWFRKLENNDEEALALWQWFRDESLMEFNRLYAELGIDFDSYNGEAFYNDKMEEVVQLLAEKGLLEESKGAQVVNLEKYGIEHPALIKKSDGATLYITRDLAAAIYRKRTYDFAKAIYVVGQEQTAHFKQLKAVLAEMGYAWSKDIQHVSFGLVTKNGQKLSTRKGNVILLEPTIAEAVKRSLAQIDTKNPDLVNKEAVAHAVGVGAIKFYDLKTDRTNGYDFDLEAMVSFEGETGPYVQYAHARIQSILRKADFQPQATENYQLNDTESWEIIKLIQDFPNTIVRAADNFEPSLIARFAIHLAQSFNKYYAHTRILDNSPERDSRLALSYATATVLKEALALLGVEAPNEM.

Residues 121 to 131 carry the 'HIGH' region motif; sequence PNIAKPFSIGH.

Belongs to the class-I aminoacyl-tRNA synthetase family. As to quaternary structure, monomer.

The protein localises to the cytoplasm. The catalysed reaction is tRNA(Arg) + L-arginine + ATP = L-arginyl-tRNA(Arg) + AMP + diphosphate. This chain is Arginine--tRNA ligase, found in Streptococcus mutans serotype c (strain ATCC 700610 / UA159).